Consider the following 186-residue polypeptide: Thiol:disulfide interchange protein CycY (186 aa).

Residues 1 to 20 form the signal peptide; the sequence is MGRYTLALLPLIVFGGIAHG. Residues 47–182 form the Thioredoxin domain; sequence DAEPAAARRA…LVPAMEKALG (136 aa). Cysteine 80 and cysteine 83 are disulfide-bonded.

This sequence belongs to the thioredoxin family. DsbE subfamily.

Its subcellular location is the periplasm. In terms of biological role, required for disulfide bond formation in some periplasmic proteins. Also acts as a disulfide oxidoreductase in cytochromes c biogenesis. The cysteines of apocytochromes c must be in the reduced state for covalent linkage between the two moieties to occur. This Rhizobium leguminosarum bv. viciae protein is Thiol:disulfide interchange protein CycY (cycY).